The chain runs to 139 residues: Holo-[acyl-carrier-protein] synthase (139 aa).

Aspartate 8 and glutamate 61 together coordinate Mg(2+).

The protein belongs to the P-Pant transferase superfamily. AcpS family. Requires Mg(2+) as cofactor.

It is found in the cytoplasm. The catalysed reaction is apo-[ACP] + CoA = holo-[ACP] + adenosine 3',5'-bisphosphate + H(+). Its function is as follows. Transfers the 4'-phosphopantetheine moiety from coenzyme A to a Ser of acyl-carrier-protein. The polypeptide is Holo-[acyl-carrier-protein] synthase (Bradyrhizobium sp. (strain BTAi1 / ATCC BAA-1182)).